The primary structure comprises 326 residues: Protein BCCIP homolog (326 aa).

Residues 37–81 (SHPEDCQCSDEDISFDEKQKIPNLPRKGKEEQVSDSSDEEDSQED) are disordered. Ser45 is modified (phosphoserine). A compositionally biased stretch (acidic residues) spans 72 to 81 (SSDEEDSQED).

The protein belongs to the BCP1 family.

This chain is Protein BCCIP homolog, found in Arabidopsis thaliana (Mouse-ear cress).